Reading from the N-terminus, the 416-residue chain is Isobutyryl-CoA dehydrogenase, mitochondrial (416 aa).

Residues 1–23 constitute a mitochondrion transit peptide; sequence MMLRGGCQRVGARLRGLRRGPRG. An N6-acetyllysine; alternate modification is found at K51. K51 bears the N6-succinyllysine; alternate mark. FAD is bound by residues 159–168 and 192–194; these read YCLTEPGSGS and FIS. Substrate is bound at residue S168. K232 carries the post-translational modification N6-acetyllysine. Residue K272 is modified to N6-succinyllysine. A substrate-binding site is contributed by 275–278; that stretch reads NGGR. FAD-binding positions include R303, 313 to 314, and 372 to 376; these read SQ and QMHGG. Residue E399 is the Proton acceptor of the active site. FAD is bound at residue 401–403; sequence SNE. R411 is a substrate binding site.

This sequence belongs to the acyl-CoA dehydrogenase family. As to quaternary structure, homotetramer, formed by a dimer of dimers. The cofactor is FAD.

Its subcellular location is the mitochondrion. The catalysed reaction is 2-methylpropanoyl-CoA + oxidized [electron-transfer flavoprotein] + H(+) = 2-methylpropenoyl-CoA + reduced [electron-transfer flavoprotein]. The enzyme catalyses (2S)-2-methylbutanoyl-CoA + oxidized [electron-transfer flavoprotein] + H(+) = (2E)-2-methylbut-2-enoyl-CoA + reduced [electron-transfer flavoprotein]. It carries out the reaction propanoyl-CoA + oxidized [electron-transfer flavoprotein] + H(+) = acryloyl-CoA + reduced [electron-transfer flavoprotein]. Its pathway is amino-acid degradation; L-valine degradation. Functionally, isobutyryl-CoA dehydrogenase which catalyzes the conversion of 2-methylpropanoyl-CoA to (2E)-2-methylpropenoyl-CoA in the valine catabolic pathway. To a lesser extent, also able to catalyze the oxidation of (2S)-2-methylbutanoyl-CoA. This Bos taurus (Bovine) protein is Isobutyryl-CoA dehydrogenase, mitochondrial (ACAD8).